The sequence spans 379 residues: Cytochrome b (379 aa).

A run of 4 helical transmembrane segments spans residues 33–53 (FGSL…FLAM), 77–98 (WLIR…FIHV), 113–133 (WNIG…GYVL), and 178–198 (FFAF…VHLL). Positions 83 and 97 each coordinate heme b. 2 residues coordinate heme b: H182 and H196. H201 provides a ligand contact to a ubiquinone. 4 consecutive transmembrane segments (helical) span residues 226-246 (TKDL…ALFF), 288-308 (LGGV…PLLN), 320-340 (VTQV…WIGG), and 347-367 (FTMI…ILMP).

Belongs to the cytochrome b family. The cytochrome bc1 complex contains 11 subunits: 3 respiratory subunits (MT-CYB, CYC1 and UQCRFS1), 2 core proteins (UQCRC1 and UQCRC2) and 6 low-molecular weight proteins (UQCRH/QCR6, UQCRB/QCR7, UQCRQ/QCR8, UQCR10/QCR9, UQCR11/QCR10 and a cleavage product of UQCRFS1). This cytochrome bc1 complex then forms a dimer. It depends on heme b as a cofactor.

It is found in the mitochondrion inner membrane. Its function is as follows. Component of the ubiquinol-cytochrome c reductase complex (complex III or cytochrome b-c1 complex) that is part of the mitochondrial respiratory chain. The b-c1 complex mediates electron transfer from ubiquinol to cytochrome c. Contributes to the generation of a proton gradient across the mitochondrial membrane that is then used for ATP synthesis. In Akodon kofordi (Koford's grass mouse), this protein is Cytochrome b (MT-CYB).